The primary structure comprises 388 residues: Chorismate synthase (388 aa).

Positions 39 and 45 each coordinate NADP(+). FMN contacts are provided by residues 130 to 132 (RSS), 251 to 252 (NA), Gly-296, 311 to 315 (KPIPT), and Arg-337.

The protein belongs to the chorismate synthase family. Homotetramer. The cofactor is FMNH2.

The catalysed reaction is 5-O-(1-carboxyvinyl)-3-phosphoshikimate = chorismate + phosphate. Its pathway is metabolic intermediate biosynthesis; chorismate biosynthesis; chorismate from D-erythrose 4-phosphate and phosphoenolpyruvate: step 7/7. Catalyzes the anti-1,4-elimination of the C-3 phosphate and the C-6 proR hydrogen from 5-enolpyruvylshikimate-3-phosphate (EPSP) to yield chorismate, which is the branch point compound that serves as the starting substrate for the three terminal pathways of aromatic amino acid biosynthesis. This reaction introduces a second double bond into the aromatic ring system. This chain is Chorismate synthase, found in Streptococcus agalactiae serotype III (strain NEM316).